Consider the following 359-residue polypeptide: tRNA-specific 2-thiouridylase MnmA (359 aa).

ATP-binding positions include 10-17 (GISGGVDS) and Leu-36. Catalysis depends on Cys-101, which acts as the Nucleophile. Cys-101 and Cys-197 are disulfide-bonded. Gly-125 provides a ligand contact to ATP. Positions 147-149 (KDQ) are interaction with tRNA. The active-site Cysteine persulfide intermediate is Cys-197. The interaction with tRNA stretch occupies residues 306-307 (RY).

The protein belongs to the MnmA/TRMU family.

It localises to the cytoplasm. The enzyme catalyses S-sulfanyl-L-cysteinyl-[protein] + uridine(34) in tRNA + AH2 + ATP = 2-thiouridine(34) in tRNA + L-cysteinyl-[protein] + A + AMP + diphosphate + H(+). Functionally, catalyzes the 2-thiolation of uridine at the wobble position (U34) of tRNA, leading to the formation of s(2)U34. This chain is tRNA-specific 2-thiouridylase MnmA, found in Chlorobium chlorochromatii (strain CaD3).